Consider the following 397-residue polypeptide: Glia-derived nexin (397 aa).

Residues 1–19 form the signal peptide; sequence MNWHFPFFILTTVTLYSVH. The N-linked (GlcNAc...) asparagine glycan is linked to Asn159.

It belongs to the serpin family. In terms of tissue distribution, most abundant in seminal vesicles.

The protein localises to the secreted. It is found in the extracellular space. Its function is as follows. Serine protease inhibitor with activity toward thrombin, trypsin, and urokinase. Promotes neurite extension by inhibiting thrombin. Binds heparin. This chain is Glia-derived nexin (Serpine2), found in Mus musculus (Mouse).